Here is a 395-residue protein sequence, read N- to C-terminus: MDLGIPDLLDAWLEPPEDIFSTGSVLELGLHCPPPEVPVTRLQEQGLQGWKSGGDRGCGLQESEPEDFLKLFIDPNEVYCSEASPGSDSGISEDPCHPDSPPAPRATSSPMLYEVVYEAGALERMQGETGPNVGLISIQLDQWSPAFMVPDSCMVSELPFDAHAHILPRAGTVAPVPCTTLLPCQTLFLTDEEKRLLGQEGVSLPSHLPLTKAEERVLKKVRRKIRNKQSAQDSRRRKKEYIDGLESRVAACSAQNQELQKKVQELERHNISLVAQLRQLQTLIAQTSNKAAQTSTCVLILLFSLALIILPSFSPFQSRPEAGSEDYQPHGVTSRNILTHKDVTENLETQVVESRLREPPGAKDANGSTRTLLEKMGGKPRPSGRIRSVLHADEM.

Residues 1 to 295 are Cytoplasmic-facing; that stretch reads MDLGIPDLLD…QTSNKAAQTS (295 aa). The tract at residues 82–108 is disordered; that stretch reads EASPGSDSGISEDPCHPDSPPAPRATS. In terms of domain architecture, bZIP spans 217–280; it reads VLKKVRRKIR…ISLVAQLRQL (64 aa). Positions 219–248 are basic motif; the sequence is KKVRRKIRNKQSAQDSRRRKKEYIDGLESR. The interval 259–280 is leucine-zipper; that stretch reads LQKKVQELERHNISLVAQLRQL. Residues 296 to 316 form a helical; Signal-anchor for type II membrane protein membrane-spanning segment; it reads TCVLILLFSLALIILPSFSPF. The Lumenal segment spans residues 317–395; that stretch reads QSRPEAGSED…IRSVLHADEM (79 aa). The tract at residues 355–395 is disordered; it reads RLREPPGAKDANGSTRTLLEKMGGKPRPSGRIRSVLHADEM. Asparagine 366 carries an N-linked (GlcNAc...) asparagine glycan.

Belongs to the bZIP family. ATF subfamily. As to quaternary structure, binds DNA as a dimer. N-glycosylated in the C-terminal region. Post-translationally, controlled by regulated intramembrane proteolysis (RIP). Following ER stress a fragment containing the cytoplasmic transcription factor domain is released by proteolysis. The cleavage seems to be performed sequentially by site-1 and site-2 proteases (PS1 and PS2). PS1 cleavage may be suppressed by a determinant in the C-terminal region. As to expression, according to PubMed:11830526, exclusively expressed in the prostate. Expressed in breast and prostate cancer cell lines. Expressed in prostatic luminal epithelial cells (at protein level). Expression is significantly more abundant in prostate cancer than in benign prostatic tissue (prostatic hyperplasia). According to PubMed:12111373, also expressed in brain, pancreas and skeletal muscle, and at lower levels in small intestine, testis, leukocyte and thymus.

Its subcellular location is the endoplasmic reticulum membrane. The protein localises to the golgi apparatus membrane. The protein resides in the nucleus. In terms of biological role, transcriptional activator that may play a role in the unfolded protein response. Binds to the UPR element (UPRE) but not to CRE element. Preferentially binds DNA with to the consensus sequence 5'-T[GT]ACGT[GA][GT]-3' and has transcriptional activation activity from UPRE. Binds to NF-kappa-B site and has transcriptional activation activity from NF-kappa-B-containing regulatory elements. This is Cyclic AMP-responsive element-binding protein 3-like protein 4 (CREB3L4) from Homo sapiens (Human).